A 293-amino-acid chain; its full sequence is Deubiquitinase OTUD6B (293 aa).

Disordered stretches follow at residues 1–43 (MEEV…RRKQ) and 57–114 (QKHE…LEKE). The region spanning 147 to 284 (LQIKEISSDG…GEHYNSVEPL (138 aa)) is the OTU domain. The segment at 152–158 (ISSDGHC) is cys-loop. The active site involves Asp155. The Nucleophile role is filled by Cys158. Positions 219-229 (VADTAAWGGQL) are variable-loop. Residues 267–277 (YMRHAYGLGEH) form a his-loop region. Residue His277 is part of the active site.

The catalysed reaction is Thiol-dependent hydrolysis of ester, thioester, amide, peptide and isopeptide bonds formed by the C-terminal Gly of ubiquitin (a 76-residue protein attached to proteins as an intracellular targeting signal).. Deubiquitinating enzyme that may play a role in the ubiquitin-dependent regulation of different cellular processes. In Danio rerio (Zebrafish), this protein is Deubiquitinase OTUD6B (otud6b).